The following is a 683-amino-acid chain: FAD-binding monooxygenase ausC (683 aa).

N-linked (GlcNAc...) asparagine glycosylation occurs at Asn5. Residues 111–131 form a helical membrane-spanning segment; that stretch reads ILIIGAGFGGLLFAVRLIQTG. FAD-binding positions include 150–153, 162–163, and Tyr168; these read TWYW and DT. 160–162 contributes to the NADP(+) binding site; it reads MCD. N-linked (GlcNAc...) asparagine glycosylation occurs at Asn286. NADP(+) contacts are provided by residues 310–316 and 333–334; these read TGASAVQ and RT. Asn525 and Asn572 each carry an N-linked (GlcNAc...) asparagine glycan.

Belongs to the FAD-binding monooxygenase family. Requires FAD as cofactor.

Its subcellular location is the membrane. It carries out the reaction preaustinoid A + AH2 + O2 = preaustinoid A1 + A + H2O. It participates in secondary metabolite biosynthesis; terpenoid biosynthesis. In terms of biological role, FAD-binding monooxygenase; part of the gene cluster A that mediates the biosynthesis of austinol and dehydroaustinol, two fungal meroterpenoids. The first step of the pathway is the synthesis of 3,5-dimethylorsellinic acid by the polyketide synthase ausA. 3,5-dimethylorsellinic acid is then prenylated by the polyprenyl transferase ausN. Further epoxidation by the FAD-dependent monooxygenase ausM and cyclization by the probable terpene cyclase ausL lead to the formation of protoaustinoid A. Protoaustinoid A is then oxidized to spiro-lactone preaustinoid A3 by the combined action of the FAD-binding monooxygenases ausB and ausC, and the dioxygenase ausE. Acid-catalyzed keto-rearrangement and ring contraction of the tetraketide portion of preaustinoid A3 by ausJ lead to the formation of preaustinoid A4. The aldo-keto reductase ausK, with the help of ausH, is involved in the next step by transforming preaustinoid A4 into isoaustinone which is in turn hydroxylated by the P450 monooxygenase ausI to form austinolide. Finally, the cytochrome P450 monooxygenase ausG modifies austinolide to austinol. Austinol can be further modified to dehydroaustinol which forms a diffusible complex with diorcinol that initiates conidiation. Due to genetic rearrangements of the clusters and the subsequent loss of some enzymes, the end products of the Emericella nidulans austinoid biosynthesis clusters are austinol and dehydroaustinol, even if additional enzymes, such as the O-acetyltransferase ausQ and the cytochrome P450 monooxygenase ausR are still functional. The protein is FAD-binding monooxygenase ausC of Emericella nidulans (strain FGSC A4 / ATCC 38163 / CBS 112.46 / NRRL 194 / M139) (Aspergillus nidulans).